A 596-amino-acid chain; its full sequence is Putative terpene synthase 3, chloroplastic (596 aa).

The transit peptide at 1–46 (MATLSMQVSTLSKQVKNLNTFGMGSASKLPMVARRVSTIRLRPICS) directs the protein to the chloroplast. Residues Asp-349 and Asp-353 each coordinate Mn(2+). Positions 349–353 (DDVYD) match the DDXXD motif motif. 2 homodimerization regions span residues 355–361 (YGTLDEL) and 427–464 (EAKW…FTLP). Residues Asp-493 and Glu-501 each coordinate Mn(2+).

This sequence belongs to the terpene synthase family. Homodimer. The cofactor is Mn(2+). It depends on Mg(2+) as a cofactor.

Its subcellular location is the plastid. The protein localises to the chloroplast. Its pathway is secondary metabolite biosynthesis; terpenoid biosynthesis. Functionally, putative monoterpene synthase. This chain is Putative terpene synthase 3, chloroplastic, found in Thymus vulgaris (Thyme).